We begin with the raw amino-acid sequence, 114 residues long: Procyclic form-specific polypeptide A-alpha (114 aa).

A signal peptide spans 1–27 (MAPRSLYLLAILLFSANLFAGVGFAAA). The tract at residues 33 to 95 (SNVIVKGGKG…EPEPEPGAAT (63 aa)) is disordered. Over residues 47 to 89 (DGPEEPEETGPEETGPEETGPEETGPEETGPEETGPEETEPEP) the composition is skewed to acidic residues. Repeat copies occupy residues 48-52 (GPEEP), 56-60 (GPEET), 61-65 (GPEET), 66-70 (GPEET), 71-75 (GPEET), 76-80 (GPEET), and 81-85 (GPEET). The 7 X 5 AA tandem repeats of G-P-E-E-[PT] stretch occupies residues 48 to 85 (GPEEPEETGPEETGPEETGPEETGPEETGPEETGPEET). Residue Gly-92 is the site of GPI-anchor amidated glycine attachment. A propeptide spanning residues 93–114 (AATLKSVALPFAVAAAALVAAF) is cleaved from the precursor.

Its subcellular location is the cell membrane. Major surface antigen of procyclic forms. In Trypanosoma brucei brucei, this protein is Procyclic form-specific polypeptide A-alpha (PARPA-ALPHA).